A 131-amino-acid chain; its full sequence is Lymphocyte antigen 6E (131 aa).

A signal peptide spans 1–20 (MKIFLPVLLAALLGVERASS). The 81-residue stretch at 21 to 101 (LMCFSCLNQK…CCQSFLCNFS (81 aa)) folds into the UPAR/Ly6 domain. Cystine bridges form between Cys23–Cys48, Cys26–Cys35, Cys41–Cys71, Cys75–Cys92, and Cys93–Cys98. The N-linked (GlcNAc...) asparagine glycan is linked to Asn99. Ser101 carries GPI-anchor amidated serine lipidation. A propeptide spans 102–131 (AADGGLRASVTLLGAGLLLSLLPALLRFGP) (removed in mature form).

Interacts with CHRNA4. Widely expressed, predominantly in liver, kidney, ovary, spleen and peripheral blood Leukocytes.

It is found in the cell membrane. GPI-anchored cell surface protein that regulates T-lymphocytes proliferation, differentiation, and activation. Regulates the T-cell receptor (TCR) signaling by interacting with component CD3Z/CD247 at the plasma membrane, leading to CD3Z/CD247 phosphorylation modulation. Restricts the entry of human coronaviruses, including SARS-CoV, MERS-CoV and SARS-CoV-2, by interfering with spike protein-mediated membrane fusion. Also plays an essential role in placenta formation by acting as the main receptor for syncytin-A (SynA). Therefore, participates in the normal fusion of syncytiotrophoblast layer I (SynT-I) and in the proper morphogenesis of both fetal and maternal vasculatures within the placenta. May also act as a modulator of nicotinic acetylcholine receptors (nAChRs) activity. Its function is as follows. (Microbial infection) Promotes entry, likely through an enhanced virus-cell fusion process, of various viruses including HIV-1, West Nile virus, dengue virus and Zika virus. In contrast, the paramyxovirus PIV5, which enters at the plasma membrane, does not require LY6E. Mechanistically, adopts a microtubule-like organization upon viral infection and enhances viral uncoating after endosomal escape. The chain is Lymphocyte antigen 6E from Homo sapiens (Human).